Consider the following 264-residue polypeptide: Acyl-[acyl-carrier-protein]--UDP-N-acetylglucosamine O-acyltransferase (264 aa).

It belongs to the transferase hexapeptide repeat family. LpxA subfamily. As to quaternary structure, homotrimer.

Its subcellular location is the cytoplasm. The catalysed reaction is a (3R)-hydroxyacyl-[ACP] + UDP-N-acetyl-alpha-D-glucosamine = a UDP-3-O-[(3R)-3-hydroxyacyl]-N-acetyl-alpha-D-glucosamine + holo-[ACP]. It participates in glycolipid biosynthesis; lipid IV(A) biosynthesis; lipid IV(A) from (3R)-3-hydroxytetradecanoyl-[acyl-carrier-protein] and UDP-N-acetyl-alpha-D-glucosamine: step 1/6. Involved in the biosynthesis of lipid A, a phosphorylated glycolipid that anchors the lipopolysaccharide to the outer membrane of the cell. The protein is Acyl-[acyl-carrier-protein]--UDP-N-acetylglucosamine O-acyltransferase of Albidiferax ferrireducens (strain ATCC BAA-621 / DSM 15236 / T118) (Rhodoferax ferrireducens).